The sequence spans 159 residues: SsrA-binding protein (159 aa).

Belongs to the SmpB family.

It is found in the cytoplasm. Functionally, required for rescue of stalled ribosomes mediated by trans-translation. Binds to transfer-messenger RNA (tmRNA), required for stable association of tmRNA with ribosomes. tmRNA and SmpB together mimic tRNA shape, replacing the anticodon stem-loop with SmpB. tmRNA is encoded by the ssrA gene; the 2 termini fold to resemble tRNA(Ala) and it encodes a 'tag peptide', a short internal open reading frame. During trans-translation Ala-aminoacylated tmRNA acts like a tRNA, entering the A-site of stalled ribosomes, displacing the stalled mRNA. The ribosome then switches to translate the ORF on the tmRNA; the nascent peptide is terminated with the 'tag peptide' encoded by the tmRNA and targeted for degradation. The ribosome is freed to recommence translation, which seems to be the essential function of trans-translation. The protein is SsrA-binding protein of Coxiella burnetii (strain CbuK_Q154) (Coxiella burnetii (strain Q154)).